We begin with the raw amino-acid sequence, 428 residues long: Protein Wnt-8b (428 aa).

The signal sequence occupies residues 1 to 22; it reads MFYTGSFWFIFFILPAIPFCHS. Residues C54 and C65 are joined by a disulfide bond. N123 and N176 each carry an N-linked (GlcNAc...) asparagine glycan. Disulfide bonds link C177–C185, C187–C205, C253–C267, C255–C262, C329–C367, C345–C360, C364–C406, C382–C397, C384–C394, and C389–C390. Residue S259 is the site of O-palmitoleoyl serine attachment. The N-linked (GlcNAc...) asparagine glycan is linked to N332.

This sequence belongs to the Wnt family. Post-translationally, palmitoleoylation is required for efficient binding to frizzled receptors. Depalmitoleoylation leads to Wnt signaling pathway inhibition. In terms of processing, proteolytic processing by tiki1 and tiki2 promotes oxidation and formation of large disulfide-bond oligomers, leading to inactivation of wnt8b. As to expression, in adults, in brain.

It is found in the secreted. Its subcellular location is the extracellular space. The protein resides in the extracellular matrix. Functionally, ligand for members of the frizzled family of seven transmembrane receptors. Plays a role in the initiation of dorsal axis development. May activate a Nieuwkoop center-like signaling pathway. The polypeptide is Protein Wnt-8b (wnt8b) (Xenopus laevis (African clawed frog)).